Reading from the N-terminus, the 318-residue chain is tRNA U34 carboxymethyltransferase (318 aa).

The carboxy-S-adenosyl-L-methionine site is built by Lys88, Trp102, Lys107, Gly126, Met192, Tyr196, and Arg311.

It belongs to the class I-like SAM-binding methyltransferase superfamily. CmoB family. As to quaternary structure, homotetramer.

The catalysed reaction is carboxy-S-adenosyl-L-methionine + 5-hydroxyuridine(34) in tRNA = 5-carboxymethoxyuridine(34) in tRNA + S-adenosyl-L-homocysteine + H(+). Catalyzes carboxymethyl transfer from carboxy-S-adenosyl-L-methionine (Cx-SAM) to 5-hydroxyuridine (ho5U) to form 5-carboxymethoxyuridine (cmo5U) at position 34 in tRNAs. This is tRNA U34 carboxymethyltransferase from Pseudomonas fluorescens (strain ATCC BAA-477 / NRRL B-23932 / Pf-5).